The sequence spans 360 residues: Peptide chain release factor 1 (360 aa).

The residue at position 235 (Gln-235) is an N5-methylglutamine. The tract at residues 285–313 (KRQQAEASTRRNLLGSGDRSDRNRTYNFP) is disordered.

This sequence belongs to the prokaryotic/mitochondrial release factor family. In terms of processing, methylated by PrmC. Methylation increases the termination efficiency of RF1.

It is found in the cytoplasm. Peptide chain release factor 1 directs the termination of translation in response to the peptide chain termination codons UAG and UAA. This is Peptide chain release factor 1 from Salmonella paratyphi A (strain ATCC 9150 / SARB42).